The primary structure comprises 301 residues: Glutamyl-Q tRNA(Asp) synthetase (301 aa).

L-glutamate contacts are provided by residues 8–12 (RFAPS) and glutamate 44. The short motif at 11–21 (PSPTGPLHFGS) is the 'HIGH' region element. Zn(2+)-binding residues include cysteine 100, cysteine 102, tyrosine 122, and cysteine 126. Positions 180 and 198 each coordinate L-glutamate. The 'KMSKS' region motif lies at 236 to 240 (KLSKQ). Lysine 239 contacts ATP.

This sequence belongs to the class-I aminoacyl-tRNA synthetase family. GluQ subfamily. Requires Zn(2+) as cofactor.

Functionally, catalyzes the tRNA-independent activation of glutamate in presence of ATP and the subsequent transfer of glutamate onto a tRNA(Asp). Glutamate is transferred on the 2-amino-5-(4,5-dihydroxy-2-cyclopenten-1-yl) moiety of the queuosine in the wobble position of the QUC anticodon. The chain is Glutamyl-Q tRNA(Asp) synthetase from Dechloromonas aromatica (strain RCB).